The following is a 194-amino-acid chain: MRKAEVKRKTAETDIYVELNIDGKGSYDIKTGIGFFDHMLSLFAKHGLFDLKVIAKGDLEVDTHHTVEDVGIVLGTAFLKASGDKKSIKRFSTFYVPMDEALVRVSLDISGRPYLYYDLPLKAERVGNFETETVEEFFRAFAYNFGITLHVELLHGVNTHHIIEASFKALGKALDEALKLDERIDGIPSTKGIL.

Belongs to the imidazoleglycerol-phosphate dehydratase family.

The protein localises to the cytoplasm. It carries out the reaction D-erythro-1-(imidazol-4-yl)glycerol 3-phosphate = 3-(imidazol-4-yl)-2-oxopropyl phosphate + H2O. The protein operates within amino-acid biosynthesis; L-histidine biosynthesis; L-histidine from 5-phospho-alpha-D-ribose 1-diphosphate: step 6/9. The sequence is that of Imidazoleglycerol-phosphate dehydratase from Caldanaerobacter subterraneus subsp. tengcongensis (strain DSM 15242 / JCM 11007 / NBRC 100824 / MB4) (Thermoanaerobacter tengcongensis).